The sequence spans 228 residues: Translation initiation factor 6 (228 aa).

This sequence belongs to the eIF-6 family.

In terms of biological role, binds to the 50S ribosomal subunit and prevents its association with the 30S ribosomal subunit to form the 70S initiation complex. This chain is Translation initiation factor 6, found in Thermococcus gammatolerans (strain DSM 15229 / JCM 11827 / EJ3).